The sequence spans 663 residues: Alcohol oxidase 2 (663 aa).

An FAD-binding site is contributed by 8 to 38 (DILVLGGGSSGSCIAGRLANLDHSLKVGLIE). The active-site Proton acceptor is the histidine 567. Residues 661–663 (ARF) carry the Microbody targeting signal motif.

Belongs to the GMC oxidoreductase family. As to quaternary structure, homooctamer. Requires FAD as cofactor.

The protein resides in the peroxisome matrix. The enzyme catalyses a primary alcohol + O2 = an aldehyde + H2O2. It functions in the pathway energy metabolism; methane degradation. Its function is as follows. Minor isoform of alcohol oxidase, which catalyzes the oxidation of methanol to formaldehyde and hydrogen peroxide, the first step in the methanol utilization pathway of methylotrophic yeasts. In Komagataella phaffii (strain ATCC 76273 / CBS 7435 / CECT 11047 / NRRL Y-11430 / Wegner 21-1) (Yeast), this protein is Alcohol oxidase 2 (AOX2).